The sequence spans 992 residues: MKTETVPPFQETPAGSSCHLNNLLSSRKLMAVGVLLGWLLVIHLLVNVWLLCLLSALLVVLGGWLGSSLAGVASGRLHLERFIPLATCPPCPEAERQLEREINRTIQMIIRDFVLSWYRSVSQEPAFEEEMEAAMKGLVQELRRRMSVMDSHAVAQSVLTLCGCHLQSYIQAKEATAGKNGPVEPSHLWEAYCRATAPHPAVHSPSAEVTYTRGVVNLLLQGLVPKPHLETRTGRHVVVELITCNVILPLISRLSDPDWIHLVLVGIFSKARDPAPCPASAPEQPSVPTSLPLIAEVEQLPEGRASPVAAPVFLSYSEPEGSAGPSPEVEEGHEAVEGDLGGMCEERKVGNNSSHFLQPNVRGPLFLCEDSELESPLSELGKETIMLMTPGSFLSDRIQDALCALESSQALEPKDGEASEGAEAEEGPGTETETGLPVSTLNSCPEIHIDTADKEIEQGDVTASVTALLEGPEKTCPSRPSCLEKDLTNDVSSLDPTLPPVLLSSSPPGPLSSATFSFEPLSSPDGPVIIQNLRITGTITAREHSGTGFHPYTLYTVKYETALDGENSSGLQQLAYHTVNRRYREFLNLQTRLEEKPDLRKFIKNVKGPKKLFPDLPLGNMDSDRVEARKSLLESFLKQLCAIPEIANSEEVQEFLALNTDARIAFVKKPFMVSRIDKMVVSAIVDTLKTAFPRSEPQSPTEELSEAETESKPQTEGKKASKSRLRFSSSKISPALSVTEAQDKILYCLQEGNVESETLSMSAMESFIEKQTKLLEMQPTKAPEKDPEQPPKGRVDSCVSDAAVPAQDPSNSDPGTETELADTALDLLLLLLTEQWKWLCTENMQKFLRLIFGTLVQRWLEVQVANLTSPQRWVQYLLLLQESIWPGGVLPKFPRPVRTQEQKLAAEKQALQSLMGVLPDLVVEILGVNKCRLSWGLVLESLQQPLINRHLIYCLGDIILEFLDLSASVEESAATTSASDTPGNSKRMGVSS.

In terms of domain architecture, PXA spans Glu-95–Arg-272. The disordered stretch occupies residues Ala-410–Asn-442. Residues Ala-418–Pro-428 are compositionally biased toward acidic residues. Residues Leu-533–Arg-663 enclose the PX domain. A 1,2-diacyl-sn-glycero-3-phospho-(1D-myo-inositol-3-phosphate) contacts are provided by Arg-582 and Arg-629. 3 disordered regions span residues Phe-692–Arg-726, Gln-778–Ser-797, and Ala-973–Ser-992. Composition is skewed to basic and acidic residues over residues Thr-709 to Lys-719 and Ala-782 to Val-795. A compositionally biased stretch (polar residues) spans Asp-980–Ser-992.

The protein belongs to the sorting nexin family. As to quaternary structure, interacts with PTPRN.

Its subcellular location is the early endosome membrane. The protein localises to the cytoplasmic vesicle membrane. Its function is as follows. Plays a role in intracellular vesicle trafficking and exocytosis. May play a role in maintaining insulin-containing dense core vesicles in pancreatic beta-cells and in preventing their degradation. May play a role in insulin secretion. Interacts with membranes containing phosphatidylinositol 3-phosphate (PtdIns(3P)). This Homo sapiens (Human) protein is Sorting nexin-19 (SNX19).